The following is a 217-amino-acid chain: Claudin-9 (217 aa).

Topologically, residues 1–12 (MASTGLELLGMT) are cytoplasmic. The helical transmembrane segment at 13 to 33 (LAVLGWLGTLVSCALPLWKVT) threads the bilayer. The Extracellular segment spans residues 34 to 81 (AFIGNSIVVAQVVWEGLWMSCVVQSTGQMQCKVYDSLLALPQDLQAAR). Residues 82-102 (ALCVVALLLALLGLLVAITGA) form a helical membrane-spanning segment. Topologically, residues 103–116 (QCTTCVEDEGAKAR) are cytoplasmic. Residues 117–137 (IVLTAGVLLLLSGILVLIPVC) traverse the membrane as a helical segment. The Extracellular portion of the chain corresponds to 138 to 159 (WTAHAIIQDFYNPLVAEALKRE). Residues 160-180 (LGASLYLGWAAAALLMLGGGL) traverse the membrane as a helical segment. The Cytoplasmic segment spans residues 181–217 (LCCTCPPSHFERPRGPRLGYSIPSRSGASGLDKRDYV).

The protein belongs to the claudin family. In terms of assembly, interacts with CLDN1, CD81 and OCLN.

It is found in the cell junction. The protein localises to the tight junction. It localises to the cell membrane. Functionally, plays a major role in tight junction-specific obliteration of the intercellular space, through calcium-independent cell-adhesion activity. The sequence is that of Claudin-9 (Cldn9) from Mus musculus (Mouse).